We begin with the raw amino-acid sequence, 596 residues long: tRNA(Met) cytidine acetyltransferase TmcA (596 aa).

Residues Gln138, Gly160–Lys169, and Arg285 each bind ATP. The N-acetyltransferase domain occupies Ser328 to Tyr481. Acetyl-CoA contacts are provided by residues Ile406–Val408 and Gln413–Lys419.

The protein belongs to the RNA cytidine acetyltransferase family. TmcA subfamily.

It localises to the cytoplasm. The enzyme catalyses cytidine(34) in elongator tRNA(Met) + acetyl-CoA + ATP + H2O = N(4)-acetylcytidine(34) in elongator tRNA(Met) + ADP + phosphate + CoA + H(+). Functionally, catalyzes the formation of N(4)-acetylcytidine (ac(4)C) at the wobble position of tRNA(Met), by using acetyl-CoA as an acetyl donor and ATP (or GTP). The polypeptide is tRNA(Met) cytidine acetyltransferase TmcA (Actinobacillus pleuropneumoniae serotype 5b (strain L20)).